A 276-amino-acid polypeptide reads, in one-letter code: Putative respiratory nitrate reductase heme subunit ORF7 (276 aa).

Residues Met-138 and Lys-228 each coordinate heme b.

In terms of assembly, probable multiprotein complex; a catalytic heterodimer of an alpha and beta chain is proposed to associate with additional subunits involved in membrane attachment and electron transfer. It depends on heme b as a cofactor.

It localises to the cell membrane. Its function is as follows. The respiratory membrane-bound nitrate reductase enzyme complex plays a role in generation of metabolic energy by using nitrate as a terminal electron acceptor during anaerobic conditions. May transfer electrons to the iron-sulfur centers of the catalytic beta subunit. The sequence is that of Putative respiratory nitrate reductase heme subunit ORF7 from Haloferax mediterranei (strain ATCC 33500 / DSM 1411 / JCM 8866 / NBRC 14739 / NCIMB 2177 / R-4) (Halobacterium mediterranei).